The following is a 72-amino-acid chain: Disintegrin cotiarin (72 aa).

The region spanning 1 to 72 (EAGEECDCGA…SADCPRNRFH (72 aa)) is the Disintegrin domain. 6 disulfide bridges follow: C6–C21, C8–C16, C15–C38, C29–C35, C34–C59, and C47–C66. The Cell attachment site motif lies at 51–53 (RGD). A disordered region spans residues 51–72 (RGDNPDDRCTGQSADCPRNRFH).

The protein belongs to the venom metalloproteinase (M12B) family. P-II subfamily. P-IIa sub-subfamily. In terms of assembly, monomer. In terms of tissue distribution, expressed by the venom gland.

Its subcellular location is the secreted. Its function is as follows. Inhibits fibrinogen interaction with platelets. Acts by binding to alpha-IIb/beta-3 (ITGA2B/ITGB3) on the platelet surface and inhibits aggregation induced by ADP, thrombin, platelet-activating factor and collagen. The sequence is that of Disintegrin cotiarin from Bothrops cotiara (Cotiara).